Here is a 152-residue protein sequence, read N- to C-terminus: 3-dehydroquinate dehydratase (152 aa).

Catalysis depends on Tyr25, which acts as the Proton acceptor. Residues Asn76, His82, and Asp89 each contribute to the substrate site. His102 functions as the Proton donor in the catalytic mechanism. Residues 103-104 (LS) and Arg113 contribute to the substrate site.

It belongs to the type-II 3-dehydroquinase family. As to quaternary structure, homododecamer.

It carries out the reaction 3-dehydroquinate = 3-dehydroshikimate + H2O. The protein operates within metabolic intermediate biosynthesis; chorismate biosynthesis; chorismate from D-erythrose 4-phosphate and phosphoenolpyruvate: step 3/7. Functionally, catalyzes a trans-dehydration via an enolate intermediate. The chain is 3-dehydroquinate dehydratase from Gloeothece citriformis (strain PCC 7424) (Cyanothece sp. (strain PCC 7424)).